The following is a 500-amino-acid chain: Maturase K (500 aa).

The protein belongs to the intron maturase 2 family. MatK subfamily.

Its subcellular location is the plastid. The protein resides in the chloroplast. Functionally, usually encoded in the trnK tRNA gene intron. Probably assists in splicing its own and other chloroplast group II introns. The sequence is that of Maturase K from Adiantum capillus-veneris (Maidenhair fern).